The following is a 107-amino-acid chain: Thioredoxin 1 (107 aa).

The region spanning 2-107 (SVAAAVTDAT…TLANTLDKHL (106 aa)) is the Thioredoxin domain. Cys-32 and Cys-35 are disulfide-bonded.

Belongs to the thioredoxin family.

Participates in various redox reactions through the reversible oxidation of its active center dithiol to a disulfide and catalyzes dithiol-disulfide exchange reactions. This Synechococcus elongatus (strain ATCC 33912 / PCC 7942 / FACHB-805) (Anacystis nidulans R2) protein is Thioredoxin 1 (trxA).